Reading from the N-terminus, the 51-residue chain is Large ribosomal subunit protein bL33 (51 aa).

The protein belongs to the bacterial ribosomal protein bL33 family.

The chain is Large ribosomal subunit protein bL33 from Idiomarina loihiensis (strain ATCC BAA-735 / DSM 15497 / L2-TR).